The sequence spans 274 residues: 4-diphosphocytidyl-2-C-methyl-D-erythritol kinase (274 aa).

Lysine 10 is a catalytic residue. Residue 101–111 participates in ATP binding; sequence PTQAGLGGGSA. Aspartate 143 is a catalytic residue.

It belongs to the GHMP kinase family. IspE subfamily.

It carries out the reaction 4-CDP-2-C-methyl-D-erythritol + ATP = 4-CDP-2-C-methyl-D-erythritol 2-phosphate + ADP + H(+). It functions in the pathway isoprenoid biosynthesis; isopentenyl diphosphate biosynthesis via DXP pathway; isopentenyl diphosphate from 1-deoxy-D-xylulose 5-phosphate: step 3/6. In terms of biological role, catalyzes the phosphorylation of the position 2 hydroxy group of 4-diphosphocytidyl-2C-methyl-D-erythritol. This chain is 4-diphosphocytidyl-2-C-methyl-D-erythritol kinase, found in Helicobacter pylori (strain J99 / ATCC 700824) (Campylobacter pylori J99).